We begin with the raw amino-acid sequence, 323 residues long: tRNA-modifying protein YgfZ (323 aa).

Positions 29 and 182 each coordinate folate.

This sequence belongs to the tRNA-modifying YgfZ family.

The protein localises to the cytoplasm. Functionally, folate-binding protein involved in regulating the level of ATP-DnaA and in the modification of some tRNAs. It is probably a key factor in regulatory networks that act via tRNA modification, such as initiation of chromosomal replication. The protein is tRNA-modifying protein YgfZ of Vibrio cholerae serotype O1 (strain M66-2).